Here is a 425-residue protein sequence, read N- to C-terminus: UPF0761 membrane protein XC_3370 (425 aa).

6 helical membrane-spanning segments follow: residues 48-68 (VFAL…FPAF), 105-125 (FTVA…HSIE), 154-174 (GTML…LPLF), 182-202 (LAEF…IVLI), 216-236 (ALPG…GFGF), and 250-270 (ALSA…SVLL).

Belongs to the UPF0761 family.

It is found in the cell inner membrane. The sequence is that of UPF0761 membrane protein XC_3370 from Xanthomonas campestris pv. campestris (strain 8004).